The sequence spans 384 residues: Formate-dependent phosphoribosylglycinamide formyltransferase (384 aa).

N(1)-(5-phospho-beta-D-ribosyl)glycinamide-binding positions include 14–15 (EL) and Glu74. ATP contacts are provided by residues Arg106, Lys147, 152–157 (SSGKGQ), 187–190 (EEFI), and Glu195. An ATP-grasp domain is found at 111 to 300 (RLAAETLGLA…EFALHVRAIL (190 aa)). 2 residues coordinate Mg(2+): Glu259 and Glu271. Residues Asp278, Lys348, and 355–356 (RR) contribute to the N(1)-(5-phospho-beta-D-ribosyl)glycinamide site.

It belongs to the PurK/PurT family. In terms of assembly, homodimer.

It carries out the reaction N(1)-(5-phospho-beta-D-ribosyl)glycinamide + formate + ATP = N(2)-formyl-N(1)-(5-phospho-beta-D-ribosyl)glycinamide + ADP + phosphate + H(+). It functions in the pathway purine metabolism; IMP biosynthesis via de novo pathway; N(2)-formyl-N(1)-(5-phospho-D-ribosyl)glycinamide from N(1)-(5-phospho-D-ribosyl)glycinamide (formate route): step 1/1. In terms of biological role, catalyzes two reactions: the first one is the production of beta-formyl glycinamide ribonucleotide (GAR) from formate, ATP and beta GAR; the second, a side reaction, is the production of acetyl phosphate and ADP from acetate and ATP. Its function is as follows. Involved in the de novo purine biosynthesis. Catalyzes the transfer of formate to 5-phospho-ribosyl-glycinamide (GAR), producing 5-phospho-ribosyl-N-formylglycinamide (FGAR). Formate is provided by PurU via hydrolysis of 10-formyl-tetrahydrofolate. In Bacillus subtilis (strain 168), this protein is Formate-dependent phosphoribosylglycinamide formyltransferase.